The sequence spans 311 residues: 3-dehydro-scyllo-inosose hydrolase (311 aa).

5 residues coordinate Zn(2+): glutamate 35, histidine 37, aspartate 46, histidine 117, and glutamate 173.

Belongs to the creatininase superfamily. Homotrimer. The cofactor is Zn(2+).

The enzyme catalyses 3-dehydro-scyllo-inosose + H2O = 5-dehydro-L-gluconate + H(+). Its pathway is polyol metabolism; myo-inositol metabolism. Functionally, catalyzes the ring-opening hydrolysis of 3-dehydro-scyllo-inosose (diketo-inositol) to 5-dehydro-L-gluconate, and thus probably functions in a myo-inositol degradation pathway together with IolG, IolM and IolO. This Thermotoga maritima (strain ATCC 43589 / DSM 3109 / JCM 10099 / NBRC 100826 / MSB8) protein is 3-dehydro-scyllo-inosose hydrolase.